We begin with the raw amino-acid sequence, 407 residues long: METYETSIGTQSYPPTLFPPPLGTGGFTTSGYIHALVDSTSNSNSNSNTNSNTNSNTNSNSDTKIPIVQISDDSHITHDSFKPYMEYHDASHLRNRNISKADQVESTEVMEQFTQWSNYKMRSRSPTINAKPIRHTSQRRTDFTSKNELSKFSKNHNFIFHKGFLKRQHSIRREDRQAKVRSRFRSKKELTSVLNYIELEQMDIANVLASQPVNLHAIRNLTSRDPAVTPIPFLRSQMYATSSRPPYLRNRSISRKLPKSQPGSLPTTMPATATKTIKQNSTTPTTRSVYNKNVGRSNTSPSVLYHPKRRGKLNTKSHARKEQLLLELWREYLMLVITQRTQLRLTLLCSPGSASNESSVCSSNASDLDMSLLSTPSSLFQMAGETKSNPIIIPDSQDDSILSSDPF.

Residues 41 to 61 are compositionally biased toward low complexity; that stretch reads SNSNSNSNTNSNTNSNTNSNS. Residues 41-64 form a disordered region; that stretch reads SNSNSNSNTNSNTNSNTNSNSDTK. Ser-260, Ser-264, Ser-300, and Ser-302 each carry phosphoserine. Residues 277–302 are compositionally biased toward polar residues; it reads IKQNSTTPTTRSVYNKNVGRSNTSPS. The interval 277-315 is disordered; the sequence is IKQNSTTPTTRSVYNKNVGRSNTSPSVLYHPKRRGKLNT. The span at 306–315 shows a compositional bias: basic residues; the sequence is HPKRRGKLNT. The short motif at 391-398 is the SUMO-binding element; it reads IIIPDSQD.

In terms of assembly, interacts with CBF2, GIS1, NAP1, PRM8, REI1, SHS1 and SMT3.

It is found in the bud neck. The protein localises to the cytoplasm. Its subcellular location is the cell cortex. Functionally, may be involved in a mitotic signaling network. Binds sumoylated proteins and may stabilize SUMO chains. The chain is Protein NIS1 (NIS1) from Saccharomyces cerevisiae (strain ATCC 204508 / S288c) (Baker's yeast).